A 177-amino-acid chain; its full sequence is Immunity protein CdiI-YPIII (177 aa).

In terms of assembly, interacts with the C-terminal DNase fragment (residues 954-1077) of cognate toxin CdiA-YPIII.

Functionally, immunity protein component of a toxin-immunity protein module, which functions as a cellular contact-dependent growth inhibition (CDI) system. CDI modules allow bacteria to communicate with and inhibit the growth of closely related neighboring bacteria in a contact-dependent fashion. Neutralizes the toxic activity of cognate toxin CdiA-YPIII (residues 954-1077). Does not inhibit toxic activity of CdiA from other toxin-immunity modules. The protein is Immunity protein CdiI-YPIII of Yersinia pseudotuberculosis serotype O:3 (strain YPIII).